A 120-amino-acid polypeptide reads, in one-letter code: Ribonuclease P protein component (120 aa).

This sequence belongs to the RnpA family. In terms of assembly, consists of a catalytic RNA component (M1 or rnpB) and a protein subunit.

The catalysed reaction is Endonucleolytic cleavage of RNA, removing 5'-extranucleotides from tRNA precursor.. Functionally, RNaseP catalyzes the removal of the 5'-leader sequence from pre-tRNA to produce the mature 5'-terminus. It can also cleave other RNA substrates such as 4.5S RNA. The protein component plays an auxiliary but essential role in vivo by binding to the 5'-leader sequence and broadening the substrate specificity of the ribozyme. The polypeptide is Ribonuclease P protein component (Dehalococcoides mccartyi (strain CBDB1)).